Reading from the N-terminus, the 592-residue chain is Isocitrate dehydrogenase kinase/phosphatase 1 (592 aa).

ATP is bound by residues 337-343 and K358; that span reads APGTPGM. Residue D393 is part of the active site.

The protein belongs to the AceK family.

The protein localises to the cytoplasm. It catalyses the reaction L-seryl-[isocitrate dehydrogenase] + ATP = O-phospho-L-seryl-[isocitrate dehydrogenase] + ADP + H(+). Its function is as follows. Bifunctional enzyme which can phosphorylate or dephosphorylate isocitrate dehydrogenase (IDH) on a specific serine residue. This is a regulatory mechanism which enables bacteria to bypass the Krebs cycle via the glyoxylate shunt in response to the source of carbon. When bacteria are grown on glucose, IDH is fully active and unphosphorylated, but when grown on acetate or ethanol, the activity of IDH declines drastically concomitant with its phosphorylation. This is Isocitrate dehydrogenase kinase/phosphatase 1 from Pseudoalteromonas translucida (strain TAC 125).